The chain runs to 208 residues: MADLSAQDKLKQICDALREETLKPAEEEAGSIVHNAREQAKRIVEEAKEEAQRIIRSAEETADQTLKKGEAALVQAGKRSLENLKQAVETKIFRESLGEWLDHVATDPEVSAKLVQALVQAVDAQGISGNLSAYIGKHVSARAVNEALGKEITSKLKEKGVSVGNFSGGAQLKVEERNWVLDMSSEVLLDLLTRFLQKDFREMIFQSC.

The protein belongs to the V-ATPase E subunit family.

In terms of biological role, produces ATP from ADP in the presence of a proton gradient across the membrane. The polypeptide is V-type ATP synthase subunit E (Chlamydia trachomatis serovar A (strain ATCC VR-571B / DSM 19440 / HAR-13)).